A 41-amino-acid polypeptide reads, in one-letter code: NVSLITAFDNLDLSRKGAYYLYYLLSERLKRGGVPVHVNRA.

Belongs to the herpesviridae UL21 family.

The sequence is that of Protein UL21 homolog from Equine herpesvirus 4 (strain 1942) (EHV-4).